A 136-amino-acid chain; its full sequence is uncharacterized protein (136 aa).

Disordered stretches follow at residues 23–44 (QESL…KEDN) and 56–95 (DGVI…ESAR). The segment covering 61–79 (SEEGCSSSGEKENSGLCSE) has biased composition (low complexity). Over residues 80–91 (ESSEEDPEEAEE) the composition is skewed to acidic residues.

This is an uncharacterized protein from Saccharomyces cerevisiae (strain ATCC 204508 / S288c) (Baker's yeast).